The chain runs to 194 residues: Acireductone dioxygenase 1 (194 aa).

Positions 1–21 (MEAWYMDDSADDQRKPHHRSP) are disordered. Positions 87, 89, 93, and 132 each coordinate Fe(2+). Ni(2+) contacts are provided by His-87, His-89, Glu-93, and His-132.

Belongs to the acireductone dioxygenase (ARD) family. Requires Fe(2+) as cofactor. Ni(2+) is required as a cofactor.

It localises to the cytoplasm. The protein localises to the nucleus. The catalysed reaction is 1,2-dihydroxy-5-(methylsulfanyl)pent-1-en-3-one + O2 = 4-methylsulfanyl-2-oxobutanoate + formate + 2 H(+). It carries out the reaction 1,2-dihydroxy-5-(methylsulfanyl)pent-1-en-3-one + O2 = 3-(methylsulfanyl)propanoate + CO + formate + 2 H(+). The protein operates within amino-acid biosynthesis; L-methionine biosynthesis via salvage pathway; L-methionine from S-methyl-5-thio-alpha-D-ribose 1-phosphate: step 5/6. Functionally, catalyzes 2 different reactions between oxygen and the acireductone 1,2-dihydroxy-3-keto-5-methylthiopentene (DHK-MTPene) depending upon the metal bound in the active site. Fe-containing acireductone dioxygenase (Fe-ARD) produces formate and 2-keto-4-methylthiobutyrate (KMTB), the alpha-ketoacid precursor of methionine in the methionine recycle pathway. Ni-containing acireductone dioxygenase (Ni-ARD) produces methylthiopropionate, carbon monoxide and formate, and does not lie on the methionine recycle pathway. This is Acireductone dioxygenase 1 from Physcomitrium patens (Spreading-leaved earth moss).